A 606-amino-acid chain; its full sequence is Thrombospondin-related anonymous protein (606 aa).

Positions Met-1 to Gly-24 are cleaved as a signal peptide. One can recognise a VWFA domain in the interval Asp-43–Val-228. The TSP type-1 domain occupies Val-235 to Pro-281. Positions Pro-301–Gly-541 are disordered. Composition is skewed to low complexity over residues Glu-409 to Pro-425, Glu-440 to Ser-450, and Pro-459 to Lys-479. 2 stretches are compositionally biased toward basic and acidic residues: residues Asn-487–Asp-504 and Asp-516–Ser-532. Residues Ile-544–Phe-564 form a helical membrane-spanning segment.

In terms of assembly, interacts (via integrin-like A-domain) with Anopheles gambiae saglin/SG1F; the interaction probably promotes sporozoite invasion of salivary gland. Interacts (via integrin-like A-domain) with human AHSG; the interaction promotes sporozoite invasion of hepatocytes and formation of exoerythrocytic forms of parasites in human hepatoma HepG2 cells.

Its subcellular location is the cell membrane. It is found in the cytoplasm. In terms of biological role, promotes parasite ability to invade host hepatocytes. Promotes parasite ability to invade mosquito salivary glands. Required for sporozoite gliding motility. The chain is Thrombospondin-related anonymous protein from Plasmodium berghei (strain Anka).